The sequence spans 66 residues: Ocellatin-PT1 (66 aa).

An N-terminal signal peptide occupies residues 1 to 22 (MAFLKKSLFLVLFLGLVSLSIC). Positions 23–39 (DEEKRQDEDDDDDDDEE) are excised as a propeptide. The residue at position 66 (Val-66) is a Valine amide.

In terms of tissue distribution, expressed by the skin glands.

It localises to the secreted. Has antibacterial activity against Gram-negative bacterium E.coli ATCC 25922 (MIC=300 uM) but not against S.pneumoniae ATCC 700603, S.choleraesuis ATCC 14028 or Gram-positive bacterium S.aureus ATCC 29313. Shows virtually no hemolytic activity and no cytotoxicity. This Leptodactylus pustulatus (Ceara white-lipped frog) protein is Ocellatin-PT1.